The primary structure comprises 79 residues: Cytochrome b (79 aa).

3 consecutive transmembrane segments (helical) span residues 1–7 (TALLLAA), 31–52 (WLIRNLHANGASFFFICIYLHI), and 67–79 (WNIGVILLLTLMA). Residues H37 and H51 each coordinate heme b.

The protein belongs to the cytochrome b family. As to quaternary structure, the cytochrome bc1 complex contains 11 subunits: 3 respiratory subunits (MT-CYB, CYC1 and UQCRFS1), 2 core proteins (UQCRC1 and UQCRC2) and 6 low-molecular weight proteins (UQCRH/QCR6, UQCRB/QCR7, UQCRQ/QCR8, UQCR10/QCR9, UQCR11/QCR10 and a cleavage product of UQCRFS1). This cytochrome bc1 complex then forms a dimer. Heme b serves as cofactor.

The protein localises to the mitochondrion inner membrane. In terms of biological role, component of the ubiquinol-cytochrome c reductase complex (complex III or cytochrome b-c1 complex) that is part of the mitochondrial respiratory chain. The b-c1 complex mediates electron transfer from ubiquinol to cytochrome c. Contributes to the generation of a proton gradient across the mitochondrial membrane that is then used for ATP synthesis. This chain is Cytochrome b (MT-CYB), found in Pomatostomus superciliosus (White-browed babbler).